The chain runs to 203 residues: Excretory canal abnormal exc-13 (203 aa).

The N-terminal stretch at 1-20 (MIGFLKFALIGTVLLGVANG) is a signal peptide. Asn32, Asn84, and Asn188 each carry an N-linked (GlcNAc...) asparagine glycan.

This sequence belongs to the UPF0376 family.

It is found in the secreted. The polypeptide is Excretory canal abnormal exc-13 (Caenorhabditis elegans).